We begin with the raw amino-acid sequence, 305 residues long: UDP-3-O-acyl-N-acetylglucosamine deacetylase (305 aa).

His-78, His-237, and Asp-241 together coordinate Zn(2+). Catalysis depends on His-264, which acts as the Proton donor.

Belongs to the LpxC family. Zn(2+) serves as cofactor.

The enzyme catalyses a UDP-3-O-[(3R)-3-hydroxyacyl]-N-acetyl-alpha-D-glucosamine + H2O = a UDP-3-O-[(3R)-3-hydroxyacyl]-alpha-D-glucosamine + acetate. Its pathway is glycolipid biosynthesis; lipid IV(A) biosynthesis; lipid IV(A) from (3R)-3-hydroxytetradecanoyl-[acyl-carrier-protein] and UDP-N-acetyl-alpha-D-glucosamine: step 2/6. Its function is as follows. Catalyzes the hydrolysis of UDP-3-O-myristoyl-N-acetylglucosamine to form UDP-3-O-myristoylglucosamine and acetate, the committed step in lipid A biosynthesis. This is UDP-3-O-acyl-N-acetylglucosamine deacetylase from Paraburkholderia phymatum (strain DSM 17167 / CIP 108236 / LMG 21445 / STM815) (Burkholderia phymatum).